The primary structure comprises 509 residues: MIILVAVVTAVISFGLGYVVAKSRIEQKNRKAQQDAVSLLKKAEQEAQEIKRKAIIEAREEVHKIKEEIEEEKKRRDLEHRSLEERLLKREEIISKREELVDKKETALEQLRVQLEAAKKKIEQREKELDERFTKLAGMTVEEARQIVIDEARQKYEHDLAILYKKIKENYEEEAEKEAKKIIATAVQRYAPEYIGEITVSTVSLPSDDMKGRIIGREGRNIRTFEKITGVDLIIDDTPEVVVLSSFNPIRREIARLTLEKLVTDGRIHPARIEEMYEKSKQEMEKMIKEAGQEATFVTGVTGLHPELIKLLGKLKFRTSYGQNVLDHSIEVAQLAALMAEELGLDVDRTRRGGLLHDIGKALDHEVEGSHTEIGAEIARRYGESDHIINMIMSHHGEQEPVCPESVLVAAADALSAARPGARRESLETYIRRLVKMEKIAMSFKNVEKAYAIQAGREVRVIVEPEKIDDVEADKMAYEIAKKIEEEVEYPGVLKVVVIREKRSIAYAK.

The helical transmembrane segment at 1 to 21 threads the bilayer; that stretch reads MIILVAVVTAVISFGLGYVVA. The region spanning 199 to 259 is the KH domain; that stretch reads TVSTVSLPSD…IRREIARLTL (61 aa). In terms of domain architecture, HD spans 325–418; it reads VLDHSIEVAQ…VAAADALSAA (94 aa).

It belongs to the RNase Y family.

It is found in the cell membrane. Functionally, endoribonuclease that initiates mRNA decay. The polypeptide is Ribonuclease Y (Pseudothermotoga lettingae (strain ATCC BAA-301 / DSM 14385 / NBRC 107922 / TMO) (Thermotoga lettingae)).